Reading from the N-terminus, the 308-residue chain is Acyl transferase (308 aa).

Active-site charge relay system residues include S116, D213, and H243.

Belongs to the LuxD family.

It functions in the pathway lipid metabolism; fatty acid reduction for biolumincescence. Its function is as follows. Acyl transferase is part of the fatty acid reductase system required for aldehyde biosynthesis; it produces fatty acids for the luminescent reaction. The protein is Acyl transferase of Shewanella hanedai (Alteromonas hanedai).